The sequence spans 126 residues: Large ribosomal subunit protein bL19 (126 aa).

It belongs to the bacterial ribosomal protein bL19 family.

This protein is located at the 30S-50S ribosomal subunit interface and may play a role in the structure and function of the aminoacyl-tRNA binding site. The protein is Large ribosomal subunit protein bL19 of Prochlorococcus marinus (strain MIT 9312).